We begin with the raw amino-acid sequence, 201 residues long: Large ribosomal subunit protein uL4 (201 aa).

Residues 45–72 (AQKTRAEVTGSGKKPWRQKGTGRARAGS) form a disordered region.

Belongs to the universal ribosomal protein uL4 family. In terms of assembly, part of the 50S ribosomal subunit.

One of the primary rRNA binding proteins, this protein initially binds near the 5'-end of the 23S rRNA. It is important during the early stages of 50S assembly. It makes multiple contacts with different domains of the 23S rRNA in the assembled 50S subunit and ribosome. Its function is as follows. Forms part of the polypeptide exit tunnel. The sequence is that of Large ribosomal subunit protein uL4 from Shewanella baltica (strain OS223).